The sequence spans 150 residues: Arginine repressor (150 aa).

This sequence belongs to the ArgR family.

The protein localises to the cytoplasm. Its pathway is amino-acid biosynthesis; L-arginine biosynthesis [regulation]. In terms of biological role, regulates arginine biosynthesis genes. The sequence is that of Arginine repressor from Psychromonas ingrahamii (strain DSM 17664 / CCUG 51855 / 37).